A 555-amino-acid polypeptide reads, in one-letter code: T-complex protein 1 subunit eta (555 aa).

The protein belongs to the TCP-1 chaperonin family. In terms of assembly, heterooligomeric complex of about 850 to 900 kDa that forms two stacked rings, 12 to 16 nm in diameter.

The protein localises to the cytoplasm. Its function is as follows. Molecular chaperone; assists the folding of proteins upon ATP hydrolysis. Known to play a role, in vitro, in the folding of actin and tubulin. The chain is T-complex protein 1 subunit eta (cct7) from Dictyostelium discoideum (Social amoeba).